The chain runs to 284 residues: MDAIKKKMLAMKMEKENALDRAEQVEQKLRDCECNKNKVEEDLNNLQKKFAILENDFDSINEQLLDANTKLEASEKKNAEIESETAGLQRRIQLLEEDLERSEERLQSATEKLEEASKAADESERGRKVLESRSLADDERLDGLEAQLKEAKYIAEDAERKFDEAARKLAITEVDLERAEARLEAAEAKILELEEELKVVGNNMKSLEISEQEASQREDSYEETIRDLTQRLKDAENRASEAERTVSKLQKEVDRLEDELLAEKERYKATSDELDSTFAELAGY.

The stretch at 1 to 284 forms a coiled coil; sequence MDAIKKKMLA…DSTFAELAGY (284 aa). Residues 105–131 form a disordered region; that stretch reads RLQSATEKLEEASKAADESERGRKVLE.

The protein belongs to the tropomyosin family. Homodimer.

Functionally, tropomyosin, in association with the troponin complex, plays a central role in the calcium dependent regulation of muscle contraction. The sequence is that of Tropomyosin from Cornu aspersum (Brown garden snail).